The sequence spans 53 residues: MAVQQNKKSRSRRDMRRSHDALTTAAVSVDARGETHLRHHVTADGYYRGRKIK.

Residues 1–27 (MAVQQNKKSRSRRDMRRSHDALTTAAV) form a disordered region. Basic residues predominate over residues 7-16 (KKSRSRRDMR).

Belongs to the bacterial ribosomal protein bL32 family.

The sequence is that of Large ribosomal subunit protein bL32 from Glaesserella parasuis serovar 5 (strain SH0165) (Haemophilus parasuis).